A 467-amino-acid polypeptide reads, in one-letter code: Ran-binding protein M homolog (467 aa).

The disordered stretch occupies residues M1–L25. Over residues N9–L25 the composition is skewed to polar residues. The B30.2/SPRY domain maps to D31–F219. The region spanning P244–V276 is the LisH domain. Positions A295–E353 constitute a CTLH domain.

It belongs to the RANBP9/10 family. Interacts with WDR36, WDS, GID8, MAEA and RMD5.

The protein resides in the cytoplasm. It localises to the nucleus. Its subcellular location is the perinuclear region. This Arabidopsis thaliana (Mouse-ear cress) protein is Ran-binding protein M homolog.